The following is a 249-amino-acid chain: ATP synthase subunit a (249 aa).

The next 6 helical transmembrane spans lie at 30–50 (SLYM…GSAG), 84–104 (FFPL…IGVI), 114–134 (LIVT…YGLY), 143–163 (VFVP…IEVI), 193–213 (FVTS…LPLA), and 220–240 (ILEV…TCIY).

Belongs to the ATPase A chain family. F-type ATPases have 2 components, CF(1) - the catalytic core - and CF(0) - the membrane proton channel. CF(1) has five subunits: alpha(3), beta(3), gamma(1), delta(1), epsilon(1). CF(0) has three main subunits: a(1), b(2) and c(9-12). The alpha and beta chains form an alternating ring which encloses part of the gamma chain. CF(1) is attached to CF(0) by a central stalk formed by the gamma and epsilon chains, while a peripheral stalk is formed by the delta and b chains.

The protein resides in the cell inner membrane. In terms of biological role, key component of the proton channel; it plays a direct role in the translocation of protons across the membrane. The chain is ATP synthase subunit a from Afipia carboxidovorans (strain ATCC 49405 / DSM 1227 / KCTC 32145 / OM5) (Oligotropha carboxidovorans).